A 339-amino-acid polypeptide reads, in one-letter code: Pre-mRNA-splicing factor syf2 (339 aa).

The interval 1–136 (MPPEKKRKTE…LQSDPSQLTA (136 aa)) is disordered. Over residues 7 to 16 (RKTEPEDKAE) the composition is skewed to basic and acidic residues. Over residues 17–37 (VTQQENDVAESTTEPNNQTVT) the composition is skewed to polar residues. The segment covering 45–93 (VTEAALATTSSSSPPVLSASETAQPDTAATSQSSSTPPTSTSAAESAAA) has biased composition (low complexity). Over residues 94–103 (KARERAERFR) the composition is skewed to basic and acidic residues. Positions 126 to 135 (RLQSDPSQLT) are enriched in polar residues.

The protein belongs to the SYF2 family. As to quaternary structure, associated with the spliceosome.

It localises to the nucleus. In terms of biological role, involved in pre-mRNA splicing. This Neurospora crassa (strain ATCC 24698 / 74-OR23-1A / CBS 708.71 / DSM 1257 / FGSC 987) protein is Pre-mRNA-splicing factor syf2 (msp-4).